We begin with the raw amino-acid sequence, 82 residues long: Cytochrome c-551 (82 aa).

Residues cysteine 12, cysteine 15, histidine 16, and methionine 61 each coordinate heme c.

Post-translationally, binds 1 heme c group covalently per subunit.

Its function is as follows. This is a prokaryotic monoheme cytochrome, unreactive with mitochondrial cytochrome C oxidase or reductase. It functions in nitrite and nitrate respiration in Pseudomonas, but it is also found in other bacteria. The sequence is that of Cytochrome c-551 from Ectopseudomonas mendocina (Pseudomonas mendocina).